The following is a 156-amino-acid chain: Cyanate hydratase (156 aa).

Residues Arg96, Glu99, and Ser122 contribute to the active site.

The protein belongs to the cyanase family.

The catalysed reaction is cyanate + hydrogencarbonate + 3 H(+) = NH4(+) + 2 CO2. Functionally, catalyzes the reaction of cyanate with bicarbonate to produce ammonia and carbon dioxide. The sequence is that of Cyanate hydratase from Mycobacteroides abscessus (strain ATCC 19977 / DSM 44196 / CCUG 20993 / CIP 104536 / JCM 13569 / NCTC 13031 / TMC 1543 / L948) (Mycobacterium abscessus).